A 60-amino-acid polypeptide reads, in one-letter code: UPF0291 protein CTC_01690.1 (60 aa).

Belongs to the UPF0291 family.

Its subcellular location is the cytoplasm. The chain is UPF0291 protein CTC_01690.1 from Clostridium tetani (strain Massachusetts / E88).